A 183-amino-acid chain; its full sequence is Inner membrane-spanning protein YciB (183 aa).

5 helical membrane passes run 22–44 (VQAAAITLVLATILQLILVRILF), 53–73 (IVGLSVIIFGILTAYFDDLAF), 76–96 (WKVTIINGLFAAVLLISQYVF), 121–141 (LGWAIFFIICMLINIIISQLF), and 153–173 (GFTGLSLVAVIITGIYLYPYI).

Belongs to the YciB family.

It localises to the cell inner membrane. Its function is as follows. Plays a role in cell envelope biogenesis, maintenance of cell envelope integrity and membrane homeostasis. The polypeptide is Inner membrane-spanning protein YciB (Haemophilus ducreyi (strain 35000HP / ATCC 700724)).